A 257-amino-acid polypeptide reads, in one-letter code: Hydroxyacylglutathione hydrolase (257 aa).

7 residues coordinate Zn(2+): histidine 54, histidine 56, aspartate 58, histidine 59, histidine 113, aspartate 137, and histidine 175.

It belongs to the metallo-beta-lactamase superfamily. Glyoxalase II family. Monomer. Zn(2+) serves as cofactor.

It carries out the reaction an S-(2-hydroxyacyl)glutathione + H2O = a 2-hydroxy carboxylate + glutathione + H(+). Its pathway is secondary metabolite metabolism; methylglyoxal degradation; (R)-lactate from methylglyoxal: step 2/2. Thiolesterase that catalyzes the hydrolysis of S-D-lactoyl-glutathione to form glutathione and D-lactic acid. This chain is Hydroxyacylglutathione hydrolase, found in Acaryochloris marina (strain MBIC 11017).